The following is a 196-amino-acid chain: Alpha-crystallin A chain (196 aa).

The residue at position 1 (M1) is an N-acetylmethionine. Residues 1-63 (MDVTIQHPWF…RTVLDSGISE (63 aa)) are required for complex formation with BFSP1 and BFSP2. The residue at position 6 (Q6) is a Deamidated glutamine; partial. S45 carries the phosphoserine modification. The residue at position 50 (Q50) is a Deamidated glutamine; partial. In terms of domain architecture, sHSP spans 76 to 185 (HAGNPKNNPI…GHSERAIPVS (110 aa)). An N6-acetyllysine mark is found at K93 and K122. H123 lines the Zn(2+) pocket. At N124 the chain carries Deamidated asparagine; partial. Zn(2+) contacts are provided by E125 and H130. Residue S145 is modified to Phosphoserine. A Deamidated asparagine; partial modification is found at N146. The segment at 168–196 (KVQSGLDAGHSERAIPVSREEKPSSAPSS) is disordered. The residue at position 170 (Q170) is a Deamidated glutamine; partial. Positions 176–190 (GHSERAIPVSREEKP) are enriched in basic and acidic residues. H177 provides a ligand contact to Zn(2+). A glycan (O-linked (GlcNAc) serine) is linked at S185.

This sequence belongs to the small heat shock protein (HSP20) family. In terms of assembly, heteromer composed of three CRYAA and one CRYAB subunits. Inter-subunit bridging via zinc ions enhances stability, which is crucial as there is no protein turn over in the lens. Can also form homodimers and homotetramers (dimers of dimers) which serve as the building blocks of homooligomers. Within homooligomers, the zinc-binding motif is created from residues of 3 different molecules. His-123 and Glu-125 from one molecule are ligands of the zinc ion, and His-130 and His-177 residues from additional molecules complete the site with tetrahedral coordination geometry. Part of a complex required for lens intermediate filament formation composed of BFSP1, BFSP2 and CRYAA. In terms of processing, acetylation at Lys-93 may increase chaperone activity. Post-translationally, undergoes age-dependent proteolytical cleavage at the C-terminus.

The protein localises to the cytoplasm. It is found in the nucleus. Contributes to the transparency and refractive index of the lens. Acts as a chaperone, preventing aggregation of various proteins under a wide range of stress conditions. Required for the correct formation of lens intermediate filaments as part of a complex composed of BFSP1, BFSP2 and CRYAA. The chain is Alpha-crystallin A chain (CRYAA) from Mesocricetus auratus (Golden hamster).